We begin with the raw amino-acid sequence, 372 residues long: MKYDLIIIGSGSVGAAAGYYATRAGLKVLMTDAHMPPHQQGSHHGDTRLIRHAYGEGEKYVPLVLRAQTLWEELSTHNEDPIFVRSGVINLGPADSPFLANVAHSAQQWQLNVEQLDAAAIMARWPEIRVPDNYIGLFEMDSGFLRSELAIKTWVRLAEEAGCAQLFNCPVTALHHDNDGVTVETADGEYRAKKVLISAGTWVQALVPELPIQPVRKVFAWYQADGRYSMKNNFPAFTGELPNGDQYYGFPAENDALKIGKHNGGQLIHSPEERKPFAAVASDGSEAFPFLRTILPGIGCCLNGAACTYDNSPDEDFIIDTLPGHDNTLIVTGLSGHGFKFASVLGEIAADFAQGKSPAFDLTPFKLNRFTQ.

4–34 (DLIIIGSGSVGAAAGYYATRAGLKVLMTDAH) contacts FAD. Residue Cys-307 is modified to S-8alpha-FAD cysteine.

The protein belongs to the MSOX/MTOX family. MTOX subfamily. As to quaternary structure, monomer. It depends on FAD as a cofactor.

The enzyme catalyses N(alpha)-methyl-L-tryptophan + O2 + H2O = L-tryptophan + formaldehyde + H2O2. In terms of biological role, catalyzes the oxidative demethylation of N-methyl-L-tryptophan. The protein is N-methyl-L-tryptophan oxidase of Citrobacter koseri (strain ATCC BAA-895 / CDC 4225-83 / SGSC4696).